A 562-amino-acid polypeptide reads, in one-letter code: Long-chain-fatty-acid--CoA ligase (562 aa).

The protein belongs to the ATP-dependent AMP-binding enzyme family. The cofactor is Mg(2+).

It is found in the membrane. The catalysed reaction is a long-chain fatty acid + ATP + CoA = a long-chain fatty acyl-CoA + AMP + diphosphate. It participates in lipid metabolism; fatty acid beta-oxidation. Its function is as follows. Catalyzes the esterification, concomitant with transport, of exogenous long-chain fatty acids into metabolically active CoA thioesters for subsequent degradation or incorporation into phospholipids. The protein is Long-chain-fatty-acid--CoA ligase (fadD) of Haemophilus influenzae (strain ATCC 51907 / DSM 11121 / KW20 / Rd).